A 513-amino-acid polypeptide reads, in one-letter code: ATP synthase subunit alpha (513 aa).

ATP is bound at residue 169 to 176 (GDRQTGKT).

This sequence belongs to the ATPase alpha/beta chains family. F-type ATPases have 2 components, CF(1) - the catalytic core - and CF(0) - the membrane proton channel. CF(1) has five subunits: alpha(3), beta(3), gamma(1), delta(1), epsilon(1). CF(0) has three main subunits: a(1), b(2) and c(9-12). The alpha and beta chains form an alternating ring which encloses part of the gamma chain. CF(1) is attached to CF(0) by a central stalk formed by the gamma and epsilon chains, while a peripheral stalk is formed by the delta and b chains.

It localises to the cell inner membrane. The enzyme catalyses ATP + H2O + 4 H(+)(in) = ADP + phosphate + 5 H(+)(out). In terms of biological role, produces ATP from ADP in the presence of a proton gradient across the membrane. The alpha chain is a regulatory subunit. The chain is ATP synthase subunit alpha from Pectobacterium carotovorum subsp. carotovorum (strain PC1).